A 5430-amino-acid chain; its full sequence is Microtubule-actin cross-linking factor 1 (5430 aa).

Positions 1–47 (MSSSDEETLSERSCRSERSCRSERSYRSERSGSLSPCPPGDTLPWNL) are disordered. Positions 1–295 (MSSSDEETLS…VITYVSSIYD (295 aa)) are actin-binding. Serine 4 carries the phosphoserine modification. The segment covering 9-30 (LSERSCRSERSCRSERSYRSER) has biased composition (basic and acidic residues). A phosphoserine mark is found at serine 35 and serine 57. 2 Calponin-homology (CH) domains span residues 78 to 181 (RVQK…LHFQ) and 194 to 298 (MSAK…DAFP). LRR repeat units follow at residues 148–171 (QRQV…LTLG) and 240–264 (LVDM…VAER). At serine 280 the chain carries Phosphoserine. LRR repeat units follow at residues 377-399 (LYKL…YHPN) and 441-464 (LNCE…LESG). An SH3 domain is found at 868-925 (KSTLSVKAICDYRQIEITICKNDECVLEDNSQRTKWKVISPTGNEAMVPSVCLLIPPP). One copy of the LRR 5 repeat lies at 1050-1073 (ISELKNIRLRLEECEQRLLKQIQS). The residue at position 1122 (serine 1122) is a Phosphoserine. LRR repeat units follow at residues 1128 to 1154 (ATTL…VCLN), 1187 to 1210 (PADL…VKDK), and 1257 to 1282 (HRVI…DYRA). 2 positions are modified to phosphoserine: serine 1367 and serine 1376. LRR repeat units follow at residues 1579–1602 (QQEL…IQNH) and 1629–1653 (LTAL…TREA). Spectrin repeat units follow at residues 1816-1891 (ELQK…NFEE) and 1933-2041 (QYQQ…ALLQ). Position 1860 is a phosphoserine (serine 1860). An LRR 11 repeat occupies 1869 to 1891 (KGDLRFVTISGQKVLETENNFEE). 2 LRR repeats span residues 2058–2083 (LQSM…LIQE) and 2194–2220 (IQEL…ALGS). Residues 2399-2507 (RMEEVQKEAS…TVARQKQLEE (109 aa)) form a Spectrin 3 repeat. Phosphoserine occurs at positions 2429 and 2454. LRR repeat units lie at residues 2444–2467 (KAFL…LAGL), 2534–2557 (GVLG…QFML), and 2702–2725 (KKRL…RMNR). 2 Spectrin repeats span residues 2733–2837 (TQQF…SRLK) and 2842–2945 (KAQK…SLEE). Phosphoserine occurs at positions 2769 and 2895. LRR repeat units follow at residues 2984-3009 (NKNL…YLRD), 3105-3127 (NKIQ…MLEE), and 3214-3237 (KEQV…LIQS). Spectrin repeat units lie at residues 3169 to 3274 (EDFY…QLQE), 3281 to 3383 (KFQD…QLED), 3388 to 3491 (AKQF…SLLE), 3714 to 3818 (RSQQ…ARLE), 3825 to 3927 (NQFW…ALDE), 4047 to 4152 (LAEK…KLED), 4157 to 4261 (AVQY…HKLE), 4267 to 4370 (LGQF…QQLQ), 4375 to 4481 (QAQG…KLEE), 4486 to 4589 (ATEF…RSLD), 4594 to 4700 (RAKQ…KLEE), 4707 to 4808 (QFMD…RLEQ), and 4812 to 4916 (QAEE…QRLE). Phosphothreonine is present on threonine 3368. LRR repeat units lie at residues 3737 to 3761 (MALG…AFSI) and 3846 to 3870 (AQLP…QLRE). Serine 4074 carries the post-translational modification Phosphoserine. Residue lysine 4252 is modified to N6-acetyllysine. The stretch at 4538–4561 (RDQIIELDQTGNQLKFLSQKQDVV) is one LRR 22 repeat. The interval 4993–5023 (PTHAPFIEKSRSGSRKSLNQPTPPPMPILSQ) is disordered. A Phosphoserine modification is found at serine 5009. EF-hand domains follow at residues 5083–5118 (HKKS…SKFP) and 5119–5154 (TTKL…NKDA). 10 residues coordinate Ca(2+): aspartate 5096, aspartate 5098, aspartate 5100, lysine 5102, glutamate 5107, aspartate 5132, aspartate 5134, aspartate 5136, tyrosine 5138, and glutamate 5143. In terms of domain architecture, GAR spans 5159–5231 (TDADKIEDEV…EFLVKNDPCR (73 aa)). Residues 5159-5430 (TDADKIEDEV…ASPRTPCPKR (272 aa)) are C-terminal tail. The disordered stretch occupies residues 5247 to 5430 (PEGASQGMTP…ASPRTPCPKR (184 aa)). Positions 5267–5301 (SSRAASPTRSSSSASQSNHSCTSMPSSPATPASGT) are enriched in low complexity. Threonine 5296 bears the Phosphothreonine mark. Residues 5317-5341 (TFHSSRTSLAGDTSNSSSPASTGAK) are compositionally biased toward polar residues. Serine 5321 and serine 5334 each carry phosphoserine. The span at 5352-5366 (SRPGSRAGSRAGSRA) shows a compositional bias: low complexity. Residues 5355–5370 (GSRAGSRAGSRASSRR) form a 4 X 4 AA tandem repeats of [GS]-S-R-[AR] region. Residues serine 5372 and serine 5375 each carry the phosphoserine modification. The segment covering 5381 to 5391 (ETQSACSDTSE) has biased composition (polar residues). A compositionally biased stretch (low complexity) spans 5392–5403 (SSAAGGQGSSRR).

The protein belongs to the plakin or cytolinker family. In terms of assembly, interacts with MAPRE1, CLASP1, CLASP2 and GOLGA4. Interacts with AXIN1 and LRP6. Found in a complex composed of MACF1, APC; AXIN1, CTNNB1 and GSK3B. Interacts with CAMSAP3. Phosphorylated on serine residues in the C-terminal tail by GSK3B. Phosphorylation inhibits microtubule-binding and this plays a critical role in bulge stem cell migration and skin wound repair. Wnt-signaling can repress phosphorylation.

Its subcellular location is the cytoplasm. It is found in the cytoskeleton. The protein localises to the golgi apparatus. It localises to the cell membrane. The protein resides in the cell projection. Its subcellular location is the ruffle membrane. It is found in the membrane. In terms of biological role, F-actin-binding protein which plays a role in cross-linking actin to other cytoskeletal proteins and also binds to microtubules. Plays an important role in ERBB2-dependent stabilization of microtubules at the cell cortex. Acts as a positive regulator of Wnt receptor signaling pathway and is involved in the translocation of AXIN1 and its associated complex (composed of APC, CTNNB1 and GSK3B) from the cytoplasm to the cell membrane. Has actin-regulated ATPase activity and is essential for controlling focal adhesions (FAs) assembly and dynamics. Interaction with CAMSAP3 at the minus ends of non-centrosomal microtubules tethers microtubules minus-ends to actin filaments, regulating focal adhesion size and cell migration. May play role in delivery of transport vesicles containing GPI-linked proteins from the trans-Golgi network through its interaction with GOLGA4. Plays a key role in wound healing and epidermal cell migration. Required for efficient upward migration of bulge cells in response to wounding and this function is primarily rooted in its ability to coordinate microtubule dynamics and polarize hair follicle stem cells. As a regulator of actin and microtubule arrangement and stabilization, it plays an essential role in neurite outgrowth, branching and spine formation during brain development. This Rattus norvegicus (Rat) protein is Microtubule-actin cross-linking factor 1.